The following is an 80-amino-acid chain: MARKKAALDFEQSLADLQTLVERLENGELSLEDSLTAFEQGIGLTRDCQAALAQAEQKVQILLERDGELAEQPFDAEQPE.

The protein belongs to the XseB family. As to quaternary structure, heterooligomer composed of large and small subunits.

It localises to the cytoplasm. The enzyme catalyses Exonucleolytic cleavage in either 5'- to 3'- or 3'- to 5'-direction to yield nucleoside 5'-phosphates.. Its function is as follows. Bidirectionally degrades single-stranded DNA into large acid-insoluble oligonucleotides, which are then degraded further into small acid-soluble oligonucleotides. In Pseudomonas fluorescens (strain ATCC BAA-477 / NRRL B-23932 / Pf-5), this protein is Exodeoxyribonuclease 7 small subunit.